The following is a 42-amino-acid chain: Photosystem I reaction center subunit IX (42 aa).

Residues 7–27 traverse the membrane as a helical segment; that stretch reads YLSVAPVLSTLWFVALAGLLI.

It belongs to the PsaJ family.

The protein resides in the plastid. Its subcellular location is the chloroplast thylakoid membrane. May help in the organization of the PsaE and PsaF subunits. In Atropa belladonna (Belladonna), this protein is Photosystem I reaction center subunit IX.